A 100-amino-acid polypeptide reads, in one-letter code: Urease subunit gamma (100 aa).

It belongs to the urease gamma subunit family. As to quaternary structure, probable heterotrimer of UreA (gamma), UreB (beta) and UreC (alpha) subunits. Three heterotrimers associate to form the active enzyme. The trimeric urease interacts with an accessory complex composed of UreD, UreF and UreG, which is required for the assembly of the nickel containing metallocenter of UreC. The UreE protein may also play a direct role in nickel transfer to the urease apoprotein.

It localises to the cytoplasm. It catalyses the reaction urea + 2 H2O + H(+) = hydrogencarbonate + 2 NH4(+). Its pathway is nitrogen metabolism; urea degradation; CO(2) and NH(3) from urea (urease route): step 1/1. The polypeptide is Urease subunit gamma (Proteus mirabilis (strain HI4320)).